A 316-amino-acid polypeptide reads, in one-letter code: tRNA uridine(34) hydroxylase (316 aa).

A Rhodanese domain is found at 123-217 (LSDDTVVIDA…YGKDPETKGE (95 aa)). The active-site Cysteine persulfide intermediate is C177.

Belongs to the TrhO family.

It carries out the reaction uridine(34) in tRNA + AH2 + O2 = 5-hydroxyuridine(34) in tRNA + A + H2O. Catalyzes oxygen-dependent 5-hydroxyuridine (ho5U) modification at position 34 in tRNAs. The chain is tRNA uridine(34) hydroxylase from Staphylococcus saprophyticus subsp. saprophyticus (strain ATCC 15305 / DSM 20229 / NCIMB 8711 / NCTC 7292 / S-41).